The primary structure comprises 868 residues: DNA mismatch repair protein MutS (868 aa).

Position 620-627 (620-627) interacts with ATP; sequence GPNMSGKS.

This sequence belongs to the DNA mismatch repair MutS family.

This protein is involved in the repair of mismatches in DNA. It is possible that it carries out the mismatch recognition step. This protein has a weak ATPase activity. In Flavobacterium johnsoniae (strain ATCC 17061 / DSM 2064 / JCM 8514 / BCRC 14874 / CCUG 350202 / NBRC 14942 / NCIMB 11054 / UW101) (Cytophaga johnsonae), this protein is DNA mismatch repair protein MutS.